A 79-amino-acid chain; its full sequence is Acyl carrier protein (79 aa).

Positions 2 to 77 (DNIEQRVKKI…LAIDFAKSKA (76 aa)) constitute a Carrier domain. S37 carries the O-(pantetheine 4'-phosphoryl)serine modification.

Belongs to the acyl carrier protein (ACP) family. 4'-phosphopantetheine is transferred from CoA to a specific serine of apo-ACP by AcpS. This modification is essential for activity because fatty acids are bound in thioester linkage to the sulfhydryl of the prosthetic group.

It is found in the cytoplasm. It functions in the pathway lipid metabolism; fatty acid biosynthesis. In terms of biological role, carrier of the growing fatty acid chain in fatty acid biosynthesis. This chain is Acyl carrier protein, found in Polynucleobacter necessarius subsp. necessarius (strain STIR1).